Consider the following 181-residue polypeptide: Mating-type M-specific polypeptide Mc (181 aa).

Residues Thr-103–Lys-171 constitute a DNA-binding region (HMG box).

The protein resides in the nucleus. It localises to the cytoplasm. It is found in the cytoskeleton. The protein localises to the microtubule organizing center. Its subcellular location is the spindle pole body. In terms of biological role, mating type proteins are sequence specific DNA-binding proteins that act as master switches in yeast differentiation by controlling gene expression in a cell type-specific fashion. Positive regulator of MFM genes. The HMG box recognizes the DNA sequence 5'-AACAAAG-3'. Required for conjugation and efficient meiosis. This Schizosaccharomyces pombe (Fission yeast) protein is Mating-type M-specific polypeptide Mc (mat3-Mc).